Here is a 577-residue protein sequence, read N- to C-terminus: Heavy metal-associated isoprenylated plant protein 34 (577 aa).

The HMA domain maps to 9-72; that stretch reads LQTCVLKVNV…KLSKSGKHAE (64 aa). The a metal cation site is built by Cys20 and Cys23. Over residues 77–87 the composition is skewed to gly residues; sequence GGGGGGGGGKG. Disordered regions lie at residues 77–136 and 150–451; these read GGGG…QPMQ and AAHG…GPGG. Residues 97–106 are compositionally biased toward low complexity; that stretch reads NLNMGGNNKP. Over residues 118–129 the composition is skewed to gly residues; that stretch reads KAGGGGGGGQNH. Residues 168 to 177 are compositionally biased toward basic and acidic residues; it reads KDQKKSVKFA. The span at 178 to 213 shows a compositional bias: acidic residues; that stretch reads DDEDDEFSEDDYDDEDFSEDDYDDDEFDDDEDDDDE. The segment covering 227 to 244 has biased composition (low complexity); sequence HMPPNKMMMPNKMMPQMG. Composition is skewed to gly residues over residues 245–254 and 266–281; these read GHHGNGGGPK and FKGG…GGGF. Basic and acidic residues-rich tracts occupy residues 294 to 326 and 344 to 358; these read KNGK…KTDA and NGDE…DGHG. Composition is skewed to gly residues over residues 379-392 and 420-451; these read KKGG…GHGG and GIGG…GPGG. Residue Cys574 is modified to Cysteine methyl ester. The S-farnesyl cysteine moiety is linked to residue Cys574. A propeptide spans 575 to 577 (removed in mature form); the sequence is SIM.

It belongs to the HIPP family.

Its function is as follows. Heavy-metal-binding protein. The polypeptide is Heavy metal-associated isoprenylated plant protein 34 (Arabidopsis thaliana (Mouse-ear cress)).